Here is a 68-residue protein sequence, read N- to C-terminus: Beta-defensin 1 (68 aa).

A signal peptide spans 1–21 (MRTSYLLLFTLCLLMSEMASG). Residues 22-32 (DNFLTGLGHRS) constitute a propeptide that is removed on maturation. 3 disulfides stabilise this stretch: Cys37/Cys66, Cys44/Cys59, and Cys49/Cys67.

This sequence belongs to the beta-defensin family. In terms of assembly, monomer. Homodimer.

The protein resides in the secreted. It is found in the membrane. Has bactericidal activity. May act as a ligand for C-C chemokine receptor CCR6. Positively regulates the sperm motility and bactericidal activity in a CCR6-dependent manner. Binds to CCR6 and triggers Ca2+ mobilization in the sperm which is important for its motility. This chain is Beta-defensin 1 (DEFB1), found in Presbytis melalophos (Mitred leaf monkey).